A 731-amino-acid polypeptide reads, in one-letter code: Nucleolar GTP-binding protein 2 (731 aa).

An N-acetylmethionine modification is found at M1. Positions 1-33 (MVKPKYKGRSTINPSKASTNPDRVQGAGGQNMR) are disordered. Residues 10–22 (STINPSKASTNPD) are compositionally biased toward polar residues. Positions 207-368 (WGELYKVIDS…LIDCPGVVYP (162 aa)) constitute a CP-type G domain. GTP contacts are provided by residues 317 to 324 (GYPNVGKS) and 361 to 365 (DCPGV). The tract at residues 481–502 (VVPEAAQNNPGEEVTETAGEGS) is disordered. At S504 the chain carries Phosphoserine. The span at 555-589 (LEEELESFSDEEEEEQEQQRDDAEESSSEPEEENV) shows a compositional bias: acidic residues. Disordered regions lie at residues 555–594 (LEEE…NDTK) and 630–731 (EKIF…RQKQ). 2 stretches are compositionally biased toward basic and acidic residues: residues 630–652 (EKIF…DRAP) and 662–671 (QREEEQEHSN). Composition is skewed to basic residues over residues 681 to 695 (ERRR…KKVG) and 721 to 731 (KHKRKKFRQKQ).

The protein belongs to the TRAFAC class YlqF/YawG GTPase family. NOG2 subfamily. As to quaternary structure, interacts with LYAR and RPL23A. Interacts with the nuclear importin-beta receptor and, at a lower extent, with importin-alpha. Widely expressed, with the highest expression level in testis.

The protein localises to the nucleus. It localises to the nucleolus. GTPase that associates with pre-60S ribosomal subunits in the nucleolus and is required for their nuclear export and maturation. May promote cell proliferation possibly by increasing p53/TP53 protein levels, and consequently those of its downstream product CDKN1A/p21, and decreasing RPL23A protein levels. The protein is Nucleolar GTP-binding protein 2 (GNL2) of Homo sapiens (Human).